We begin with the raw amino-acid sequence, 827 residues long: Cadherin-17 (827 aa).

Positions 1 to 25 (MVSAQLHFLCLLTLYLTCGYGEEGK) are cleaved as a signal peptide. Residues 26-786 (FSGPLKPMTF…RQDGIPTVGM (761 aa)) lie on the Extracellular side of the membrane. Cadherin domains lie at 29-127 (PLKP…TFLQ), 128-243 (SKYE…APEP), 244-339 (VEIR…PPTC), 340-448 (LSPV…IPIF), 449-565 (ETSN…VPVF), 566-666 (PQRI…PPRL), and 667-776 (AKDY…RPAG). Asn-148, Asn-249, Asn-418, Asn-545, Asn-573, Asn-586, and Asn-721 each carry an N-linked (GlcNAc...) asparagine glycan. The helical transmembrane segment at 787–807 (AVGILLTTFLVIGIILAVVFI) threads the bilayer. The Cytoplasmic segment spans residues 808-827 (RMRKDKVENPQSPENKPLRS).

In terms of tissue distribution, highest expression is found in intestine with lower expression in spleen, bone marrow, lung and testis. No expression detected in liver, kidney, heart, brain or skeletal muscle. Expressed in precursor B-cells and myeloid cells.

The protein localises to the cell membrane. Its function is as follows. Cadherins are calcium-dependent cell adhesion proteins. They preferentially interact with themselves in a homophilic manner in connecting cells; cadherins may thus contribute to the sorting of heterogeneous cell types. LI-cadherin may have a role in the morphological organization of liver and intestine. This chain is Cadherin-17 (Cdh17), found in Mus musculus (Mouse).